The sequence spans 1080 residues: Phycobiliprotein ApcE (1080 aa).

The tract at residues 18–76 (QTLAVATITQAEQQDRFLGTGELNELATYFASGAKRLEIAQTLTENSEIIVSRAANRIF) is phycobilin-like 1. The tract at residues 77–144 (VGGSPMSFLE…GPTPPGFRPI (68 aa)) is phycobilin-like loop. Residues 145 to 237 (NVARYGPSNM…YMDVLLTEFK (93 aa)) are phycobilin-like 2. Position 195 (cysteine 195) interacts with (2R,3E)-phycocyanobilin. PBS-linker domains follow at residues 252–432 (DQQG…FRKV), 514–693 (LGPK…QKQE), 710–888 (PDIQ…KQND), and 922–1080 (STSA…SLGN). A disordered region spans residues 906–930 (GTSSSGRNGFTDLGRSSTSAQGQLG).

It belongs to the phycobilisome linker protein family. As to quaternary structure, phycobilisomes of this organism are composed of a two cylinder core, from which six rods radiate. The core is mainly composed of allophycocyanin alpha and beta chains, and of three minor components: the allophycocyanin alpha-B chain, a 18.3 kDa polypeptide, and the anchor polypeptide L-CM. Contains one covalently linked bilin chromophore. This protein autochromophorylates.

It is found in the cellular thylakoid membrane. In terms of biological role, this protein is postulated to act both as terminal energy acceptor (by its phycobilin-like domains) and as a linker polypeptide (by its repeats and arms) that stabilizes the phycobilisome core architecture. Has intrinsic bilin lyase activity. The chain is Phycobiliprotein ApcE (apcE) from Microchaete diplosiphon (Fremyella diplosiphon).